Reading from the N-terminus, the 664-residue chain is Fructose-1,6-bisphosphatase class 3 (664 aa).

It belongs to the FBPase class 3 family. It depends on Mn(2+) as a cofactor.

It catalyses the reaction beta-D-fructose 1,6-bisphosphate + H2O = beta-D-fructose 6-phosphate + phosphate. It participates in carbohydrate biosynthesis; gluconeogenesis. This is Fructose-1,6-bisphosphatase class 3 from Bacteroides thetaiotaomicron (strain ATCC 29148 / DSM 2079 / JCM 5827 / CCUG 10774 / NCTC 10582 / VPI-5482 / E50).